Consider the following 546-residue polypeptide: CTP synthase (546 aa).

Residues 1–266 are amidoligase domain; sequence MTTRYIFVTG…DQLVTKRFGI (266 aa). A CTP-binding site is contributed by Ser14. Ser14 is a UTP binding site. ATP contacts are provided by residues 15-20 and Asp72; that span reads SLGKGI. Mg(2+)-binding residues include Asp72 and Glu140. CTP is bound by residues 147–149, 187–192, and Lys223; these read DIE and KTKPTQ. UTP contacts are provided by residues 187-192 and Lys223; that span reads KTKPTQ. An ATP-binding site is contributed by 239–241; the sequence is KDV. One can recognise a Glutamine amidotransferase type-1 domain in the interval 291-542; the sequence is TIGMVGKYIE…VAAAAAYQKR (252 aa). Gly352 contributes to the L-glutamine binding site. Catalysis depends on Cys379, which acts as the Nucleophile; for glutamine hydrolysis. L-glutamine is bound by residues 380-383, Glu403, and Arg470; that span reads LGMQ. Catalysis depends on residues His515 and Glu517.

This sequence belongs to the CTP synthase family. As to quaternary structure, homotetramer.

The enzyme catalyses UTP + L-glutamine + ATP + H2O = CTP + L-glutamate + ADP + phosphate + 2 H(+). It catalyses the reaction L-glutamine + H2O = L-glutamate + NH4(+). The catalysed reaction is UTP + NH4(+) + ATP = CTP + ADP + phosphate + 2 H(+). It participates in pyrimidine metabolism; CTP biosynthesis via de novo pathway; CTP from UDP: step 2/2. Its activity is regulated as follows. Allosterically activated by GTP, when glutamine is the substrate; GTP has no effect on the reaction when ammonia is the substrate. The allosteric effector GTP functions by stabilizing the protein conformation that binds the tetrahedral intermediate(s) formed during glutamine hydrolysis. Inhibited by the product CTP, via allosteric rather than competitive inhibition. Its function is as follows. Catalyzes the ATP-dependent amination of UTP to CTP with either L-glutamine or ammonia as the source of nitrogen. Regulates intracellular CTP levels through interactions with the four ribonucleotide triphosphates. The protein is CTP synthase of Shewanella pealeana (strain ATCC 700345 / ANG-SQ1).